Here is a 191-residue protein sequence, read N- to C-terminus: Probable rho GDP-dissociation inhibitor (191 aa).

Residues 1-22 (MSDHENTGENTSEYQYKQPPQK) are disordered. Polar residues predominate over residues 8–21 (GENTSEYQYKQPPQ).

Belongs to the Rho GDI family.

The protein resides in the cytoplasm. Regulates the GDP/GTP exchange reaction of the Rho proteins by inhibiting the dissociation of GDP from them, and the subsequent binding of GTP to them. This is Probable rho GDP-dissociation inhibitor (rhi-1) from Caenorhabditis elegans.